We begin with the raw amino-acid sequence, 1106 residues long: DNA polymerase delta catalytic subunit (1106 aa).

The interval Met1–Ala28 is disordered. The Nuclear localization signal motif lies at Lys4 to Arg19. An Omega-N-methylarginine modification is found at Arg19. Residue Lys573 forms a Glycyl lysine isopeptide (Lys-Gly) (interchain with G-Cter in SUMO2) linkage. Residues Cys1011, Cys1014, Cys1025, and Cys1028 each contribute to the Zn(2+) site. A CysA-type zinc finger spans residues Cys1011–Cys1028. 4 residues coordinate [4Fe-4S] cluster: Cys1057, Cys1060, Cys1070, and Cys1075. The CysB motif motif lies at Cys1057–Cys1075.

Belongs to the DNA polymerase type-B family. In terms of assembly, component of the tetrameric DNA polymerase delta complex (Pol-delta4), which consists of POLD1/p125, POLD2/p50, POLD3/p66/p68 and POLD4/p12, with POLD1 bearing both DNA polymerase and 3' to 5' proofreading exonuclease activities. Within Pol-delta4, directly interacts with POLD2 and POLD4. Following genotoxic stress by DNA-damaging agents, such as ultraviolet light and methyl methanesulfonate, or by replication stress induced by treatment with hydroxyurea or aphidicolin, Pol-delta4 is converted into a trimeric form of the complex (Pol-delta3) by POLD4 degradation. Pol-delta3 is the major form at S phase replication sites and DNA damage sites. POLD1 displays different catalytic properties depending upon the complex it is found in. It exhibits higher proofreading activity and fidelity than Pol-delta4, making it particularly well suited to respond to DNA damage. Directly interacts with PCNA, as do POLD3 and POLD4; this interaction stimulates Pol-delta4 polymerase activity. As POLD2 and POLD4, directly interacts with WRNIP1; this interaction stimulates DNA polymerase delta-mediated DNA synthesis, independently of the presence of PCNA. This stimulation may be due predominantly to an increase of initiation frequency and also to increased processivity. Also observed as a dimeric complex with POLD2 (Pol-delta2). Pol-delta2 is relatively insensitive to the PCNA stimulation (2-5-fold) compared to Pol-delta4 that is stimulated by over 50-fold. Interacts with POLDIP2; this interaction is indirect and most probably mediated through POLD2-binding. Interacts with CIAO1. Interacts with POLDIP2. Interacts with RFC1. [4Fe-4S] cluster is required as a cofactor.

Its subcellular location is the nucleus. The enzyme catalyses DNA(n) + a 2'-deoxyribonucleoside 5'-triphosphate = DNA(n+1) + diphosphate. Its activity is regulated as follows. Regulated by alteration of quaternary structure. Exhibits burst rates of DNA synthesis are about 5 times faster in the presence of POLD4 (Pol-delta4 complex) than in its absence (Pol-delta3 complex), while the affinity of the enzyme for its DNA and dNTP substrates appears unchanged. The Pol-delta3 complex is more likely to proofread DNA synthesis because it cleaves single-stranded DNA twice as fast and transfers mismatched DNA from the polymerase to the exonuclease sites 9 times faster compared to the Pol-delta3 complex. Pol-delta3 also extends mismatched primers 3 times more slowly in the absence of POLD4. The conversion of Pol-delta4 into Pol-delta3 is induced by genotoxic stress or by replication stress leading POLD4 degradation. Stimulated in the presence of PCNA. This stimulation is further increased in the presence of KCTD13/PDIP1, most probably via direct interaction between KCTD13 and POLD2. As the catalytic component of the trimeric (Pol-delta3 complex) and tetrameric DNA polymerase delta complexes (Pol-delta4 complex), plays a crucial role in high fidelity genome replication, including in lagging strand synthesis, and repair. Exhibits both DNA polymerase and 3'- to 5'-exonuclease activities. Requires the presence of accessory proteins POLD2, POLD3 and POLD4 for full activity. Depending upon the absence (Pol-delta3) or the presence of POLD4 (Pol-delta4), displays differences in catalytic activity. Most notably, expresses higher proofreading activity in the context of Pol-delta3 compared with that of Pol-delta4. Although both Pol-delta3 and Pol-delta4 process Okazaki fragments in vitro, Pol-delta3 may be better suited to fulfill this task, exhibiting near-absence of strand displacement activity compared to Pol-delta4 and stalling on encounter with the 5'-blocking oligonucleotides. Pol-delta3 idling process may avoid the formation of a gap, while maintaining a nick that can be readily ligated. Along with DNA polymerase kappa, DNA polymerase delta carries out approximately half of nucleotide excision repair (NER) synthesis following UV irradiation. Under conditions of DNA replication stress, in the presence of POLD3 and POLD4, may catalyze the repair of broken replication forks through break-induced replication (BIR). Involved in the translesion synthesis (TLS) of templates carrying O6-methylguanine, 8oxoG or abasic sites. The polypeptide is DNA polymerase delta catalytic subunit (POLD1) (Bos taurus (Bovine)).